Consider the following 156-residue polypeptide: Small ribosomal subunit protein uS7 (156 aa).

It belongs to the universal ribosomal protein uS7 family. As to quaternary structure, part of the 30S ribosomal subunit. Contacts proteins S9 and S11.

Its function is as follows. One of the primary rRNA binding proteins, it binds directly to 16S rRNA where it nucleates assembly of the head domain of the 30S subunit. Is located at the subunit interface close to the decoding center, probably blocks exit of the E-site tRNA. The sequence is that of Small ribosomal subunit protein uS7 from Alkaliphilus metalliredigens (strain QYMF).